Consider the following 247-residue polypeptide: Probable transcriptional regulatory protein BHWA1_01533 (247 aa).

The tract at residues 1-22 (MSGHSKWASIKHKKAANDSKKG) is disordered.

The protein belongs to the TACO1 family.

Its subcellular location is the cytoplasm. This chain is Probable transcriptional regulatory protein BHWA1_01533, found in Brachyspira hyodysenteriae (strain ATCC 49526 / WA1).